Here is a 165-residue protein sequence, read N- to C-terminus: SsrA-binding protein (165 aa).

The disordered stretch occupies residues E141–R165.

It belongs to the SmpB family.

Its subcellular location is the cytoplasm. Functionally, required for rescue of stalled ribosomes mediated by trans-translation. Binds to transfer-messenger RNA (tmRNA), required for stable association of tmRNA with ribosomes. tmRNA and SmpB together mimic tRNA shape, replacing the anticodon stem-loop with SmpB. tmRNA is encoded by the ssrA gene; the 2 termini fold to resemble tRNA(Ala) and it encodes a 'tag peptide', a short internal open reading frame. During trans-translation Ala-aminoacylated tmRNA acts like a tRNA, entering the A-site of stalled ribosomes, displacing the stalled mRNA. The ribosome then switches to translate the ORF on the tmRNA; the nascent peptide is terminated with the 'tag peptide' encoded by the tmRNA and targeted for degradation. The ribosome is freed to recommence translation, which seems to be the essential function of trans-translation. This Anaeromyxobacter sp. (strain Fw109-5) protein is SsrA-binding protein.